Consider the following 428-residue polypeptide: Elongation factor 1-alpha (428 aa).

Residues 5 to 217 form the tr-type G domain; the sequence is KPHVNIVFIG…DQIPEPEKPV (213 aa). Positions 14–21 are G1; it reads GHVDHGKS. Residue 14–21 coordinates GTP; the sequence is GHVDHGKS. A Mg(2+)-binding site is contributed by S21. Residues 68–72 are G2; that stretch reads GITID. The interval 89-92 is G3; sequence DAPG. Residues 89–93 and 144–147 each bind GTP; these read DAPGH and NKMD. The interval 144–147 is G4; that stretch reads NKMD. The tract at residues 181-183 is G5; that stretch reads SAW.

It belongs to the TRAFAC class translation factor GTPase superfamily. Classic translation factor GTPase family. EF-Tu/EF-1A subfamily.

The protein localises to the cytoplasm. It carries out the reaction GTP + H2O = GDP + phosphate + H(+). Its function is as follows. GTP hydrolase that promotes the GTP-dependent binding of aminoacyl-tRNA to the A-site of ribosomes during protein biosynthesis. This chain is Elongation factor 1-alpha, found in Pyrococcus furiosus (strain ATCC 43587 / DSM 3638 / JCM 8422 / Vc1).